The primary structure comprises 273 residues: Putative phosphoenolpyruvate synthase regulatory protein (273 aa).

153 to 160 (GVSRSGKT) contributes to the ADP binding site.

The protein belongs to the pyruvate, phosphate/water dikinase regulatory protein family. PSRP subfamily.

The catalysed reaction is [pyruvate, water dikinase] + ADP = [pyruvate, water dikinase]-phosphate + AMP + H(+). The enzyme catalyses [pyruvate, water dikinase]-phosphate + phosphate + H(+) = [pyruvate, water dikinase] + diphosphate. Functionally, bifunctional serine/threonine kinase and phosphorylase involved in the regulation of the phosphoenolpyruvate synthase (PEPS) by catalyzing its phosphorylation/dephosphorylation. This Leptothrix cholodnii (strain ATCC 51168 / LMG 8142 / SP-6) (Leptothrix discophora (strain SP-6)) protein is Putative phosphoenolpyruvate synthase regulatory protein.